The chain runs to 430 residues: ATP-dependent RNA helicase cgh-1 (430 aa).

A Q motif motif is present at residues Val43–Glu71. Residues Ile74–Ile244 form the Helicase ATP-binding domain. Ala87–Thr94 contacts ATP. Positions Asp192–Asp195 match the DEAD box motif. Residues Gly254–Leu414 enclose the Helicase C-terminal domain.

Belongs to the DEAD box helicase family. DDX6/DHH1 subfamily. As to quaternary structure, interacts with car-1 in a germline ribonucleoprotein complex. Interacts with ifet-1. Interacts with oma-1, which is a component of a ribonucleoprotein complex, in an RNA-dependent manner. In terms of tissue distribution, expression is restricted to two germline precursors Z2 and Z3 in L1 stage hermaphrodites, and is detectable specifically in the gonad at low levels into the L3 stage. Expression is significantly higher during the early L4 stage. In adults, expression remains gonad-specific and was not apparent in the somatically derived uterus. Expressed in germ granules (P granules); when associated with pgl-1.

The protein localises to the cytoplasm. The catalysed reaction is ATP + H2O = ADP + phosphate + H(+). Probable RNA helicase required for oocyte and sperm function. Also required to prevent the physiological germline apoptosis mechanism killing essentially all developing oocytes. In Caenorhabditis elegans, this protein is ATP-dependent RNA helicase cgh-1 (cgh-1).